A 139-amino-acid polypeptide reads, in one-letter code: Transcription antitermination protein NusB (139 aa).

It belongs to the NusB family.

Involved in transcription antitermination. Required for transcription of ribosomal RNA (rRNA) genes. Binds specifically to the boxA antiterminator sequence of the ribosomal RNA (rrn) operons. The chain is Transcription antitermination protein NusB from Enterobacter sp. (strain 638).